The following is a 548-amino-acid chain: Lipase 2 (548 aa).

An N-terminal signal peptide occupies residues 1-14; the sequence is MKLCLLALGAAVAA. Cys-74 and Cys-111 are oxidised to a cystine. Ser-223 serves as the catalytic Acyl-ester intermediate. A disulfide bridge links Cys-282 with Cys-291. The Charge relay system role is filled by Glu-355. An N-linked (GlcNAc...) asparagine glycan is attached at Asn-365. His-463 functions as the Charge relay system in the catalytic mechanism.

This sequence belongs to the type-B carboxylesterase/lipase family.

The enzyme catalyses a triacylglycerol + H2O = a diacylglycerol + a fatty acid + H(+). The polypeptide is Lipase 2 (LIP2) (Diutina rugosa (Yeast)).